The sequence spans 336 residues: N-acetyl-gamma-glutamyl-phosphate reductase (336 aa).

Residue C156 is part of the active site.

The protein belongs to the NAGSA dehydrogenase family. Type 1 subfamily.

Its subcellular location is the cytoplasm. The catalysed reaction is N-acetyl-L-glutamate 5-semialdehyde + phosphate + NADP(+) = N-acetyl-L-glutamyl 5-phosphate + NADPH + H(+). Its pathway is amino-acid biosynthesis; L-arginine biosynthesis; N(2)-acetyl-L-ornithine from L-glutamate: step 3/4. In terms of biological role, catalyzes the NADPH-dependent reduction of N-acetyl-5-glutamyl phosphate to yield N-acetyl-L-glutamate 5-semialdehyde. This Moritella profunda protein is N-acetyl-gamma-glutamyl-phosphate reductase.